The chain runs to 778 residues: pH-response regulator protein palH/prr-4 (778 aa).

The Extracellular segment spans residues 1 to 108 (MEPRQLFSDP…DPFYASTFPQ (108 aa)). A helical transmembrane segment spans residues 109–129 (CYALAATTIIAYTLVIMLFIT). Residues 130-160 (PRSFLDGGVVVLGRKGFTNGGGGTSIGGRPW) lie on the Periplasmic side of the membrane. Residues 161-181 (LQKVAALSVAISLTIANAATF) form a helical membrane-spanning segment. Residues 182–201 (RAAEQQYSWGVQNAKQLQED) are Extracellular-facing. Residues 202-222 (VLGGAELKIIRIISDTFLWLA) form a helical membrane-spanning segment. Over 223 to 237 (QAQTLIRLFPRQREK) the chain is Periplasmic. The chain crosses the membrane as a helical span at residues 238 to 258 (VIIKWTAFALITLDVIFQSLN). Over 259-275 (SFKYGGSDLTRPKFTEA) the chain is Extracellular. The helical transmembrane segment at 276-296 (VPALSYLFALALGVLYAAWVL) threads the bilayer. Residues 297 to 314 (YYSIMKKRYAFYHPLMKN) lie on the Periplasmic side of the membrane. Residues 315 to 335 (MILVAVLSVVSILVPVVFFIL) traverse the membrane as a helical segment. At 336-341 (DISKPD) the chain is on the extracellular side. The chain crosses the membrane as a helical span at residues 342-362 (FAGWGDYVRWVGAAAASVIVW). The Periplasmic portion of the chain corresponds to 363–778 (EWVERIEALE…RSDSSTTPSP (416 aa)). Disordered stretches follow at residues 394–499 (ASQS…DTTS), 514–605 (ELTS…DENS), and 660–778 (ELNH…TPSP). Residues 446 to 456 (HRTEPSSRNEP) are compositionally biased toward basic and acidic residues. Over residues 457-466 (NEGSSPVAET) the composition is skewed to polar residues. Basic and acidic residues-rich tracts occupy residues 588 to 605 (FVTR…DENS) and 661 to 675 (LNHS…EESR). The segment covering 720 to 732 (PIVTQGSFTNNRY) has biased composition (polar residues). The segment covering 749–759 (ARAPSQPQSPS) has biased composition (low complexity). The span at 769–778 (RSDSSTTPSP) shows a compositional bias: polar residues.

It belongs to the palH/RIM21 family.

It localises to the cell membrane. In terms of biological role, required for the proteolytic cleavage of the transcription factor pacc-1 in response to alkaline ambient pH. The sequence is that of pH-response regulator protein palH/prr-4 (prr-4) from Neurospora crassa (strain ATCC 24698 / 74-OR23-1A / CBS 708.71 / DSM 1257 / FGSC 987).